Consider the following 128-residue polypeptide: MESKDQGAKNLNMENDHQKKEEKEEKPQDTIKREPVVAPTFEAGKNCAPRGGRRRFRVRQPIAHYRWDLMHRVGEPQGRMREENVQRFGEDMRQLMEKLRERQLSHSLRAVSTDPPHHDHHDEFCLMP.

A disordered region spans residues 1–55; the sequence is MESKDQGAKNLNMENDHQKKEEKEEKPQDTIKREPVVAPTFEAGKNCAPRGGRRR. The segment covering 14–35 has biased composition (basic and acidic residues); sequence ENDHQKKEEKEEKPQDTIKREP. S105 carries the phosphoserine; by PKB/AKT1 modification. The interval 107 to 128 is disordered; it reads SLRAVSTDPPHHDHHDEFCLMP. Residues 115–128 are compositionally biased toward basic and acidic residues; it reads PPHHDHHDEFCLMP. A his cluster region spans residues 117–121; that stretch reads HHDHH. C125 provides a ligand contact to Zn(2+).

It belongs to the BEX family. Interacts with neurotrophin receptor p75NTR/NGFR. Interacts with OMP. Phosphorylated. Phosphorylation of Ser-105 protects it from the proteasome. Post-translationally, ubiquitinated. Degraded by the proteasome. In terms of tissue distribution, expressed in the central nervous system. Expressed in Schwann cells from newborn sciatic nerve.

The protein resides in the nucleus. It localises to the cytoplasm. Functionally, signaling adapter molecule involved in p75NTR/NGFR signaling. Plays a role in cell cycle progression and neuronal differentiation. Inhibits neuronal differentiation in response to nerve growth factor (NGF). May act as a link between the cell cycle and neurotrophic factor signaling, possibly by functioning as an upstream modulator of receptor signaling, coordinating biological responses to external signals with internal cellular states. In absence of reductive stress, acts as a pseudosubstrate for the CRL2(FEM1B) complex: associates with FEM1B via zinc, thereby preventing association between FEM1B and its substrates. This is Protein BEX1 (Bex1) from Rattus norvegicus (Rat).